A 372-amino-acid polypeptide reads, in one-letter code: Carbamoyl phosphate synthase small chain (372 aa).

A CPSase region spans residues 1-179; sequence MRAILALEDG…ALVTGKTLPP (179 aa). Serine 45, glycine 231, and glycine 233 together coordinate L-glutamine. The Glutamine amidotransferase type-1 domain occupies 183–369; it reads DIVAFDFGIK…RKMIAASKRQ (187 aa). Cysteine 258 (nucleophile) is an active-site residue. Residues leucine 259, glutamine 262, asparagine 300, glycine 302, and phenylalanine 303 each contribute to the L-glutamine site. Active-site residues include histidine 342 and glutamate 344.

The protein belongs to the CarA family. In terms of assembly, composed of two chains; the small (or glutamine) chain promotes the hydrolysis of glutamine to ammonia, which is used by the large (or ammonia) chain to synthesize carbamoyl phosphate. Tetramer of heterodimers (alpha,beta)4.

It catalyses the reaction hydrogencarbonate + L-glutamine + 2 ATP + H2O = carbamoyl phosphate + L-glutamate + 2 ADP + phosphate + 2 H(+). The catalysed reaction is L-glutamine + H2O = L-glutamate + NH4(+). Its pathway is amino-acid biosynthesis; L-arginine biosynthesis; carbamoyl phosphate from bicarbonate: step 1/1. It functions in the pathway pyrimidine metabolism; UMP biosynthesis via de novo pathway; (S)-dihydroorotate from bicarbonate: step 1/3. In terms of biological role, small subunit of the glutamine-dependent carbamoyl phosphate synthetase (CPSase). CPSase catalyzes the formation of carbamoyl phosphate from the ammonia moiety of glutamine, carbonate, and phosphate donated by ATP, constituting the first step of 2 biosynthetic pathways, one leading to arginine and/or urea and the other to pyrimidine nucleotides. The small subunit (glutamine amidotransferase) binds and cleaves glutamine to supply the large subunit with the substrate ammonia. This Akkermansia muciniphila (strain ATCC BAA-835 / DSM 22959 / JCM 33894 / BCRC 81048 / CCUG 64013 / CIP 107961 / Muc) protein is Carbamoyl phosphate synthase small chain.